A 766-amino-acid chain; its full sequence is Subtilisin-like protease SBT4.15 (766 aa).

A signal peptide spans 1–23 (MVSNQRVRLFMLCFCLVNNAVIA). The propeptide at 24–113 (ATEDENVERK…VFKNTQRQLH (90 aa)) is activation peptide. The Inhibitor I9 domain maps to 35 to 113 (YIVYMGEATE…VFKNTQRQLH (79 aa)). One can recognise a Peptidase S8 domain in the interval 117–601 (SWDFLGLVES…SGQINPRRAI (485 aa)). Aspartate 144 (charge relay system) is an active-site residue. N-linked (GlcNAc...) asparagine glycosylation is present at asparagine 175. The active-site Charge relay system is histidine 210. 3 N-linked (GlcNAc...) asparagine glycosylation sites follow: asparagine 233, asparagine 376, and asparagine 465. The PA domain occupies 365–460 (MYPLTSGSLA…YVFFEDGTKI (96 aa)). Serine 543 serves as the catalytic Charge relay system. Asparagine 624, asparagine 638, and asparagine 668 each carry an N-linked (GlcNAc...) asparagine glycan.

Belongs to the peptidase S8 family. The C-terminal propeptide is autocleaved.

Its subcellular location is the secreted. This chain is Subtilisin-like protease SBT4.15, found in Arabidopsis thaliana (Mouse-ear cress).